The primary structure comprises 394 residues: LL-diaminopimelate aminotransferase (394 aa).

Substrate is bound by residues Tyr-14 and Gly-41. Pyridoxal 5'-phosphate-binding positions include Tyr-71, Ala-104–Lys-105, Tyr-128, Asn-174, Tyr-205, and Ser-233–Ser-235. Lys-105, Tyr-128, and Asn-174 together coordinate substrate. Residue Lys-236 is modified to N6-(pyridoxal phosphate)lysine. 2 residues coordinate pyridoxal 5'-phosphate: Arg-244 and Asn-275. The substrate site is built by Asn-275 and Arg-369.

Belongs to the class-I pyridoxal-phosphate-dependent aminotransferase family. LL-diaminopimelate aminotransferase subfamily. In terms of assembly, homodimer. Requires pyridoxal 5'-phosphate as cofactor.

The enzyme catalyses (2S,6S)-2,6-diaminopimelate + 2-oxoglutarate = (S)-2,3,4,5-tetrahydrodipicolinate + L-glutamate + H2O + H(+). It participates in amino-acid biosynthesis; L-lysine biosynthesis via DAP pathway; LL-2,6-diaminopimelate from (S)-tetrahydrodipicolinate (aminotransferase route): step 1/1. Involved in the synthesis of meso-diaminopimelate (m-DAP or DL-DAP), required for both lysine and peptidoglycan biosynthesis. Catalyzes the direct conversion of tetrahydrodipicolinate to LL-diaminopimelate. Is also able to use meso-diaminopimelate, cystathionine, lysine or ornithine as substrates. The sequence is that of LL-diaminopimelate aminotransferase from Chlamydia trachomatis serovar D (strain ATCC VR-885 / DSM 19411 / UW-3/Cx).